The following is a 241-amino-acid chain: Small ribosomal subunit protein uS2 (241 aa).

The protein belongs to the universal ribosomal protein uS2 family.

The polypeptide is Small ribosomal subunit protein uS2 (Proteus mirabilis (strain HI4320)).